The chain runs to 391 residues: MSVTFAQGFSAAGVAAGISSVEGKKDLALVVNNGPLDAAAGVFTSNRFCAAPVQWSRKVVADGHVKAVILNSGGANACTGEAGYAQSVATAETVAGLIGAEPNDVAVCSTGLIGELLPLDNVLAGAKSAHEALAATAEAGTDASHAIMTTDTKPKTVELTGSNGWKIGGMVKGSGMIAPQLATMLCVITTDAVVSAGQMQAALAVAAEHSFNRIDVDGCMSTNDTVLLLASGASGIEPDKDEFNKLVREACASLSRQIIGDGEGASHDIRITVTGATSEDAALACGRAVAASNLLKCAISGNDPNWGRIVSSLGTVPPEVAPYDSNKVTVDVNGVRICENGGAGRDRSEVDMTPREVHIDIDLNTGSDAEATVWTDDLTHEYVHINADYES.

Substrate is bound by residues T149, K172, T183, E263, N386, and S391. T183 (nucleophile) is an active-site residue.

This sequence belongs to the ArgJ family. As to quaternary structure, heterotetramer of two alpha and two beta chains.

Its subcellular location is the cytoplasm. It catalyses the reaction N(2)-acetyl-L-ornithine + L-glutamate = N-acetyl-L-glutamate + L-ornithine. It carries out the reaction L-glutamate + acetyl-CoA = N-acetyl-L-glutamate + CoA + H(+). It functions in the pathway amino-acid biosynthesis; L-arginine biosynthesis; L-ornithine and N-acetyl-L-glutamate from L-glutamate and N(2)-acetyl-L-ornithine (cyclic): step 1/1. The protein operates within amino-acid biosynthesis; L-arginine biosynthesis; N(2)-acetyl-L-ornithine from L-glutamate: step 1/4. Functionally, catalyzes two activities which are involved in the cyclic version of arginine biosynthesis: the synthesis of N-acetylglutamate from glutamate and acetyl-CoA as the acetyl donor, and of ornithine by transacetylation between N(2)-acetylornithine and glutamate. The chain is Arginine biosynthesis bifunctional protein ArgJ from Bifidobacterium longum (strain NCC 2705).